The primary structure comprises 465 residues: MGIMMMILGLLVIIVCLCTALLRWNQMRYSKKGLPPGTMGWPIFGETTEFLKQGPDFMKNQRLRYGSFFKSHILGCPTIVSMDAELNRYILMNESKGLVAGYPQSMLDILGTCNIAAVHGPSHRLMRGSLLSLISPTMMKDHLLPKIDDFMRNYLCGWDDLETVDIQEKTKHMAFLSSLLQIAETLKKPEVEEYRTEFFKLVVGTLSVPIDIPGTNYRSGVQARNNIDRLLTELMQERKESGETFTDMLGYLMKKEDNRYLLTDKEIRDQVVTILYSGYETVSTTSMMALKYLHDHPKALEELRREHLAIRERKRPDEPLTLDDIKSMKFTRAVIFETSRLATIVNGVLRKTTHDLELNGYLIPKGWRIYVYTREINYDTSLYEDPMIFNPWRWMEKSLESKSYFLLFGGGVRLCPGKELGISEVSSFLHYFVTKYRWEENGEDKLMVFPRVSAPKGYHLKCSPY.

A helical transmembrane segment spans residues 2–22; that stretch reads GIMMMILGLLVIIVCLCTALL. Cysteine 415 contributes to the heme binding site. A lipid anchor (S-farnesyl cysteine) is attached at cysteine 462. The Farnesylation CAAX motif motif lies at 462 to 465; the sequence is CSPY.

The protein belongs to the cytochrome P450 family. Heme serves as cofactor. In terms of processing, isoprenylated (farnesylated); this addition of a 15-carbon farnesyl isoprenoid to the carboxy terminus is required for endoplasmic reticulum localization and essential for the biosynthesis of brassinolide. Expressed in stems, hypocotyls, leaves, siliques, shoots, and roots, with a higher expression in apical shoots.

The protein resides in the membrane. The protein localises to the endoplasmic reticulum. It carries out the reaction 6-deoxoteasterone + reduced [NADPH--hemoprotein reductase] + O2 = 6alpha-hydroxyteasterone + oxidized [NADPH--hemoprotein reductase] + H2O + H(+). The enzyme catalyses 6alpha-hydroxytyphasterol + reduced [NADPH--hemoprotein reductase] + O2 = teasterone + oxidized [NADPH--hemoprotein reductase] + 2 H2O + H(+). It catalyses the reaction 3-dehydro-6-deoxoteasterone + reduced [NADPH--hemoprotein reductase] + O2 = 3-dehydro-6alpha-hydroxyteasterone + oxidized [NADPH--hemoprotein reductase] + H2O + H(+). The catalysed reaction is 3-dehydro-6alpha-hydroxyteasterone + reduced [NADPH--hemoprotein reductase] + O2 = 3-dehydroteasterone + oxidized [NADPH--hemoprotein reductase] + 2 H2O + H(+). It carries out the reaction 6-deoxotyphasterol + reduced [NADPH--hemoprotein reductase] + O2 = 6alpha-hydroxytyphasterol + oxidized [NADPH--hemoprotein reductase] + H2O + H(+). The enzyme catalyses 6alpha-hydroxytyphasterol + reduced [NADPH--hemoprotein reductase] + O2 = typhasterol + oxidized [NADPH--hemoprotein reductase] + 2 H2O + H(+). It catalyses the reaction 6-deoxocastasterone + reduced [NADPH--hemoprotein reductase] + O2 = 6alpha-hydroxycastasterone + oxidized [NADPH--hemoprotein reductase] + H2O + H(+). The catalysed reaction is 6alpha-hydroxycastasterone + reduced [NADPH--hemoprotein reductase] + O2 = castasterone + oxidized [NADPH--hemoprotein reductase] + 2 H2O + H(+). It carries out the reaction 6-deoxo-28-norteasterone + 2 reduced [NADPH--hemoprotein reductase] + 2 O2 = 28-norteasterone + 2 oxidized [NADPH--hemoprotein reductase] + 3 H2O + 2 H(+). The enzyme catalyses 6-deoxo-28-norteasterone + reduced [NADPH--hemoprotein reductase] + O2 = 6alpha-hydroxy-28-norteasterone + oxidized [NADPH--hemoprotein reductase] + H2O + H(+). It catalyses the reaction 6alpha-hydroxy-28-norteasterone + reduced [NADPH--hemoprotein reductase] + O2 = 28-norteasterone + oxidized [NADPH--hemoprotein reductase] + 2 H2O + H(+). The catalysed reaction is 6-deoxo-28-nortyphasterol + 2 reduced [NADPH--hemoprotein reductase] + 2 O2 = 28-nortyphasterol + 2 oxidized [NADPH--hemoprotein reductase] + 3 H2O + 2 H(+). It carries out the reaction 6-deoxo-28-nortyphasterol + reduced [NADPH--hemoprotein reductase] + O2 = 6alpha-hydroxy-28-nortyphasterol + oxidized [NADPH--hemoprotein reductase] + H2O + H(+). The enzyme catalyses 6alpha-hydroxy-28-nortyphasterol + reduced [NADPH--hemoprotein reductase] + O2 = 28-nortyphasterol + oxidized [NADPH--hemoprotein reductase] + 2 H2O + H(+). It catalyses the reaction 6-deoxo-28-norcastasterone + 2 reduced [NADPH--hemoprotein reductase] + 2 O2 = 28-norcastasterone + 2 oxidized [NADPH--hemoprotein reductase] + 3 H2O + 2 H(+). The catalysed reaction is 6-deoxo-28-norcastasterone + reduced [NADPH--hemoprotein reductase] + O2 = 6alpha-hydroxy-28-norcastasterone + oxidized [NADPH--hemoprotein reductase] + H2O + H(+). It carries out the reaction 6alpha-hydroxy-28-norcastasterone + reduced [NADPH--hemoprotein reductase] + O2 = 28-norcastasterone + oxidized [NADPH--hemoprotein reductase] + 2 H2O + H(+). The enzyme catalyses 3-dehydro-6-deoxo-28-norteasterone + 2 reduced [NADPH--hemoprotein reductase] + 2 O2 = 6-dehydro-28-norteasterone + 2 oxidized [NADPH--hemoprotein reductase] + 3 H2O + 2 H(+). It catalyses the reaction 3-dehydro-6-deoxo-28-norteasterone + reduced [NADPH--hemoprotein reductase] + O2 = 3-dehydro-6alpha-hydroxy-28-norteasterone + oxidized [NADPH--hemoprotein reductase] + H2O + H(+). The catalysed reaction is 3-dehydro-6alpha-hydroxy-28-norteasterone + reduced [NADPH--hemoprotein reductase] + O2 = 6-dehydro-28-norteasterone + oxidized [NADPH--hemoprotein reductase] + 2 H2O + H(+). It carries out the reaction teasterone + reduced [NADPH--hemoprotein reductase] + O2 = 7-oxateasterone + oxidized [NADPH--hemoprotein reductase] + H2O + H(+). The enzyme catalyses castasterone + reduced [NADPH--hemoprotein reductase] + O2 = brassinolide + oxidized [NADPH--hemoprotein reductase] + H2O + H(+). It catalyses the reaction typhasterol + reduced [NADPH--hemoprotein reductase] + O2 = 7-oxatyphasterol + oxidized [NADPH--hemoprotein reductase] + H2O + H(+). The catalysed reaction is 6-deoxocastasterone + 2 reduced [NADPH--hemoprotein reductase] + 2 O2 = castasterone + 2 oxidized [NADPH--hemoprotein reductase] + 3 H2O + 2 H(+). It carries out the reaction 6-deoxoteasterone + 2 reduced [NADPH--hemoprotein reductase] + 2 O2 = teasterone + 2 oxidized [NADPH--hemoprotein reductase] + 3 H2O + 2 H(+). The enzyme catalyses 6-deoxotyphasterol + 2 reduced [NADPH--hemoprotein reductase] + 2 O2 = typhasterol + 2 oxidized [NADPH--hemoprotein reductase] + 3 H2O + 2 H(+). It catalyses the reaction 3-dehydro-6-deoxoteasterone + 2 reduced [NADPH--hemoprotein reductase] + 2 O2 = 3-dehydroteasterone + 2 oxidized [NADPH--hemoprotein reductase] + 3 H2O + 2 H(+). Its pathway is plant hormone biosynthesis; brassinosteroid biosynthesis. Its function is as follows. Mediates Baeyer-Villiger oxidation and catalyzes the C6-oxidation step and lactonization in brassinosteroids biosynthesis. Converts 6-deoxocastasterone (6-deoxoCS) to castasterone (CS), and castasterone to brassinolide (BL). May also convert 6-deoxoteasterone (6-deoxoTE) to teasterone (TE), 3-dehydro-6-deoxoteasterone (6-deoxo3DT, 6-deoxo-3-DHT) to 3-dehydroteasterone (3DT, 3-DHT), and 6-deoxotyphasterol (6-deoxoTY) to typhasterol (TY). Also seems to be able to convert teasterone (TE) and typhasterol (TY) to 7-oxateasterone (7-OXTE) and 7-oxatyphasterol (7-OXTY), respectively. Catalyzes the conversion of 6-deoxo-28-norteasterone (6-deoxo-28-norTE) to 28-norteasterone (28-norTE), 6-deoxo-28-nordeoxoteasterone (6-deoxo-28-nor-3-DHT) to 28-nordeoxoteasterone (28-nor-3-DHT), 6-deoxo-28-nortyphasterol (6-deoxo-28-norTY) to 28-nortyphasterol (28-norTY) and 6-deoxo-28-norcastasterone (6-deoxo-28-norCS) to 28-norcastasterone (28-norCS). Involved in a negative regulation of responses to abscisic acid (ABA) and drought tolerance. The polypeptide is Cytochrome P450 85A2 (CYP85A2) (Arabidopsis thaliana (Mouse-ear cress)).